A 331-amino-acid polypeptide reads, in one-letter code: tRNA (guanine-N(7)-)-methyltransferase (331 aa).

The S-adenosyl-L-methionine site is built by Glu-29, Glu-55, and Asp-105. Residue Asp-105 is part of the active site. Positions 109 and 141 each coordinate substrate.

The protein belongs to the class I-like SAM-binding methyltransferase superfamily. TrmB family.

The enzyme catalyses guanosine(46) in tRNA + S-adenosyl-L-methionine = N(7)-methylguanosine(46) in tRNA + S-adenosyl-L-homocysteine. It participates in tRNA modification; N(7)-methylguanine-tRNA biosynthesis. Its function is as follows. Catalyzes the formation of N(7)-methylguanine at position 46 (m7G46) in tRNA. The sequence is that of tRNA (guanine-N(7)-)-methyltransferase from Deinococcus geothermalis (strain DSM 11300 / CIP 105573 / AG-3a).